A 420-amino-acid chain; its full sequence is Carbohydrate sulfotransferase 1 (420 aa).

Residue Met1 is a topological domain, cytoplasmic. The chain crosses the membrane as a helical; Signal-anchor for type II membrane protein span at residues Gln2–Ile23. The Lumenal segment spans residues Arg24 to Leu420. The N-linked (GlcNAc...) asparagine glycan is linked to Asn64. Thr77–Phe83 provides a ligand contact to 3'-phosphoadenylyl sulfate. Residues Asn153 and Asn197 are each glycosylated (N-linked (GlcNAc...) asparagine). Arg242–Ser250 is a binding site for 3'-phosphoadenylyl sulfate. Residues Asn342 and Asn405 are each glycosylated (N-linked (GlcNAc...) asparagine).

The protein belongs to the sulfotransferase 1 family. Gal/GlcNAc/GalNAc subfamily.

The protein localises to the golgi apparatus membrane. The enzyme catalyses 3'-phosphoadenylyl sulfate + keratan = adenosine 3',5'-bisphosphate + keratan 6'-sulfate.. Sulfotransferase that utilizes 3'-phospho-5'-adenylyl sulfate (PAPS) as sulfonate donor to catalyze the transfer of sulfate to position 6 of galactose (Gal) residues of keratan. The chain is Carbohydrate sulfotransferase 1 (chst1) from Danio rerio (Zebrafish).